The following is a 282-amino-acid chain: DegV domain-containing protein M6_Spy0690 (282 aa).

Residues 3 to 280 (LAVITDSTAT…EGAIAFGVTP (278 aa)) enclose the DegV domain. Residues Thr61 and Ser94 each coordinate hexadecanoate.

Functionally, may bind long-chain fatty acids, such as palmitate, and may play a role in lipid transport or fatty acid metabolism. This is DegV domain-containing protein M6_Spy0690 from Streptococcus pyogenes serotype M6 (strain ATCC BAA-946 / MGAS10394).